The primary structure comprises 403 residues: Lissencephaly-1 homolog 1 (403 aa).

Residues 7–38 form the LisH domain; the sequence is QRDELNQAIHQYLLISYQQSAQLFKTEAAVKD. The stretch at 51-87 forms a coiled coil; it reads NSIVRLSKRVITLEQQVEQLNEQLAQAQAGKIQFNKS. 7 WD repeats span residues 103–142, 145–184, 187–226, 229–270, 271–327, 330–369, and 373–403; these read GHRAGVNCVAFHPQYQILGSASDDGSIKLWDYESGHFEKT, GHTSNVNCLAFDPTGKYICSASSDLSIKIWELKNHTCVKT, GHEHSVSTVQFSDHGDFILSASRDKNIKLWEVATGFCKKT, EHQE…HQLS, GHEH…NLFT, GHDNWVNGVSFHPDGVHMLSVSDDKTIRVWNLKEQKQKKK, and AHDKFILKCEINKFIFATCSVDQTIKLWLLS.

This sequence belongs to the WD repeat LIS1/nudF family.

It is found in the cytoplasm. The protein localises to the cytoskeleton. The protein resides in the microtubule organizing center. Its subcellular location is the centrosome. Positively regulates the activity of the minus-end directed microtubule motor protein dynein. May enhance dynein-mediated microtubule sliding by targeting dynein to the microtubule plus end. Required for several dynein- and microtubule-dependent processes. The polypeptide is Lissencephaly-1 homolog 1 (Paramecium tetraurelia).